We begin with the raw amino-acid sequence, 91 residues long: DNA-binding protein HU (91 aa).

This sequence belongs to the bacterial histone-like protein family.

Histone-like DNA-binding protein which is capable of wrapping DNA to stabilize it, and thus to prevent its denaturation under extreme environmental conditions. The chain is DNA-binding protein HU (hup) from Clostridium pasteurianum.